The sequence spans 862 residues: Cadherin-related family member 5 (862 aa).

The signal sequence occupies residues 1-28; the sequence is MGAPALLWPPLLLPLLTVLFGHLPGTLA. Over 29-671 the chain is Extracellular; that stretch reads QAQVCSANQT…GQRFSTVDMA (643 aa). 9 N-linked (GlcNAc...) asparagine glycosylation sites follow: Asn-36, Asn-45, Asn-135, Asn-173, Asn-201, Asn-311, Asn-408, Asn-438, and Asn-479. Cadherin domains lie at 40–127, 128–240, 252–357, and 358–462; these read FTMN…APEF, PFTI…TPWF, IQAQ…PLQF, and SQSL…PPST. The interval 452 to 658 is disordered; it reads IQVSEREPPS…TTGPISGVGE (207 aa). Low complexity predominate over residues 461–500; that stretch reads STESPTPPEAGGTTGPSSNTTLETPSTSGTSQGPATTSSG. Positions 529–652 are enriched in polar residues; sequence LGISTSPQTA…GTSQPTTTGP (124 aa). Tandem repeats lie at residues 545–575, 576–606, and 607–636. The 4 X 31 AA approximate tandem repeats stretch occupies residues 545 to 648; that stretch reads TQTPKPGTSQ…TPKPGTSQPT (104 aa). One copy of the 4; truncated repeat lies at 637-648; sequence TQTPKPGTSQPT. The chain crosses the membrane as a helical span at residues 672-692; that stretch reads VLGGVLGALLLLALIFLIILI. Over 693–862 the chain is Cytoplasmic; that stretch reads HKHYRHRFTC…LGAVADNTYV (170 aa). A mediates interaction with USH1C and MYO7B and is required for proper localization to microvilli tips and function in microvilli organization region spans residues 693–862; that stretch reads HKHYRHRFTC…LGAVADNTYV (170 aa). 2 disordered regions span residues 706–803 and 821–862; these read KAKE…EGGY and LNEP…NTYV. Phosphoserine is present on residues Ser-729, Ser-751, and Ser-755. Over residues 739–768 the composition is skewed to pro residues; the sequence is GPEPVQPPLRPPSPMSSSPTPPSSMPPSPQ. Thr-758 carries the phosphothreonine modification. Phosphoserine is present on residues Ser-766 and Ser-783. Residues 791-801 show a composition bias toward basic and acidic residues; it reads LTKERRPEGEG. The residue at position 825 (Thr-825) is a Phosphothreonine. The span at 827–837 shows a compositional bias: low complexity; that stretch reads DVDSASASGSE. A phosphoserine mark is found at Ser-832, Ser-834, and Ser-836.

Part of the IMAC/intermicrovillar adhesion complex/intermicrovillar tip-link complex composed of ANKS4B, MYO7B, USH1C, CDHR2 and CDHR5. Interacts (via cytoplasmic domain) with USH1C and MYO7B; required for proper localization of CDHR5 to microvilli tips and its function in brush border differentiation. N- and O-glycosylated. Expressed predominantly in kidney. Also detected in lung and small intestine.

It is found in the apical cell membrane. The protein resides in the cell projection. It localises to the microvillus membrane. In terms of biological role, intermicrovillar adhesion molecule that forms, via its extracellular domain, calcium-dependent heterophilic complexes with CDHR2 on adjacent microvilli. Thereby, controls the packing of microvilli at the apical membrane of epithelial cells. Through its cytoplasmic domain, interacts with microvillus cytoplasmic proteins to form the intermicrovillar adhesion complex/IMAC. This complex plays a central role in microvilli and epithelial brush border differentiation. The protein is Cadherin-related family member 5 of Rattus norvegicus (Rat).